The following is a 346-amino-acid chain: Methionine import ATP-binding protein MetN 1 (346 aa).

Residues 2 to 241 form the ABC transporter domain; it reads IEFKQVTKTF…PQHPTTEKFV (240 aa). Residue 38-45 coordinates ATP; the sequence is GFSGAGKS.

The protein belongs to the ABC transporter superfamily. Methionine importer (TC 3.A.1.24) family. As to quaternary structure, the complex is composed of two ATP-binding proteins (MetN), two transmembrane proteins (MetI) and a solute-binding protein (MetQ).

The protein localises to the cell membrane. The enzyme catalyses L-methionine(out) + ATP + H2O = L-methionine(in) + ADP + phosphate + H(+). It catalyses the reaction D-methionine(out) + ATP + H2O = D-methionine(in) + ADP + phosphate + H(+). Its function is as follows. Part of the ABC transporter complex MetNIQ involved in methionine import. Responsible for energy coupling to the transport system. In Shouchella clausii (strain KSM-K16) (Alkalihalobacillus clausii), this protein is Methionine import ATP-binding protein MetN 1.